A 374-amino-acid polypeptide reads, in one-letter code: Aminomethyltransferase (374 aa).

This sequence belongs to the GcvT family. In terms of assembly, the glycine cleavage system is composed of four proteins: P, T, L and H.

The enzyme catalyses N(6)-[(R)-S(8)-aminomethyldihydrolipoyl]-L-lysyl-[protein] + (6S)-5,6,7,8-tetrahydrofolate = N(6)-[(R)-dihydrolipoyl]-L-lysyl-[protein] + (6R)-5,10-methylene-5,6,7,8-tetrahydrofolate + NH4(+). Functionally, the glycine cleavage system catalyzes the degradation of glycine. In Caldanaerobacter subterraneus subsp. tengcongensis (strain DSM 15242 / JCM 11007 / NBRC 100824 / MB4) (Thermoanaerobacter tengcongensis), this protein is Aminomethyltransferase.